Reading from the N-terminus, the 152-residue chain is Aspartate carbamoyltransferase regulatory chain (152 aa).

4 residues coordinate Zn(2+): Cys-108, Cys-113, Cys-137, and Cys-140.

This sequence belongs to the PyrI family. Contains catalytic and regulatory chains. Zn(2+) serves as cofactor.

Involved in allosteric regulation of aspartate carbamoyltransferase. The protein is Aspartate carbamoyltransferase regulatory chain of Neisseria meningitidis serogroup A / serotype 4A (strain DSM 15465 / Z2491).